Reading from the N-terminus, the 160-residue chain is 2-C-methyl-D-erythritol 2,4-cyclodiphosphate synthase (160 aa).

Asp-9 and His-11 together coordinate a divalent metal cation. Residues 9-11 (DVH) and 35-36 (HS) contribute to the 4-CDP-2-C-methyl-D-erythritol 2-phosphate site. His-43 contacts a divalent metal cation. Residues 57 to 59 (DIG), 62 to 66 (FPDND), and Phe-140 each bind 4-CDP-2-C-methyl-D-erythritol 2-phosphate.

Belongs to the IspF family. As to quaternary structure, homotrimer. It depends on a divalent metal cation as a cofactor.

The enzyme catalyses 4-CDP-2-C-methyl-D-erythritol 2-phosphate = 2-C-methyl-D-erythritol 2,4-cyclic diphosphate + CMP. It functions in the pathway isoprenoid biosynthesis; isopentenyl diphosphate biosynthesis via DXP pathway; isopentenyl diphosphate from 1-deoxy-D-xylulose 5-phosphate: step 4/6. Its function is as follows. Involved in the biosynthesis of isopentenyl diphosphate (IPP) and dimethylallyl diphosphate (DMAPP), two major building blocks of isoprenoid compounds. Catalyzes the conversion of 4-diphosphocytidyl-2-C-methyl-D-erythritol 2-phosphate (CDP-ME2P) to 2-C-methyl-D-erythritol 2,4-cyclodiphosphate (ME-CPP) with a corresponding release of cytidine 5-monophosphate (CMP). This is 2-C-methyl-D-erythritol 2,4-cyclodiphosphate synthase from Fusobacterium nucleatum subsp. nucleatum (strain ATCC 25586 / DSM 15643 / BCRC 10681 / CIP 101130 / JCM 8532 / KCTC 2640 / LMG 13131 / VPI 4355).